A 1404-amino-acid polypeptide reads, in one-letter code: DNA-directed RNA polymerase subunit beta' (1404 aa).

Cys-70, Cys-72, Cys-85, and Cys-88 together coordinate Zn(2+). Residues Asp-460, Asp-462, and Asp-464 each coordinate Mg(2+). Zn(2+) contacts are provided by Cys-825, Cys-899, Cys-906, and Cys-909.

It belongs to the RNA polymerase beta' chain family. In terms of assembly, the RNAP catalytic core consists of 2 alpha, 1 beta, 1 beta' and 1 omega subunit. When a sigma factor is associated with the core the holoenzyme is formed, which can initiate transcription. Mg(2+) is required as a cofactor. It depends on Zn(2+) as a cofactor.

It catalyses the reaction RNA(n) + a ribonucleoside 5'-triphosphate = RNA(n+1) + diphosphate. Functionally, DNA-dependent RNA polymerase catalyzes the transcription of DNA into RNA using the four ribonucleoside triphosphates as substrates. The protein is DNA-directed RNA polymerase subunit beta' of Nitrosomonas eutropha (strain DSM 101675 / C91 / Nm57).